A 358-amino-acid polypeptide reads, in one-letter code: NADH-quinone oxidoreductase subunit H (358 aa).

8 helical membrane-spanning segments follow: residues 20–40, 95–115, 128–148, 168–188, 206–226, 253–273, 290–310, and 334–354; these read ITVG…IPLI, ALFY…WAVI, IGLL…IIAG, ISYE…SGSM, VFSW…ISAV, GFAF…ISAL, WGFI…AVLY, and VLIP…ISPL.

It belongs to the complex I subunit 1 family. In terms of assembly, NDH-1 is composed of 14 different subunits. Subunits NuoA, H, J, K, L, M, N constitute the membrane sector of the complex.

The protein localises to the cell inner membrane. It carries out the reaction a quinone + NADH + 5 H(+)(in) = a quinol + NAD(+) + 4 H(+)(out). In terms of biological role, NDH-1 shuttles electrons from NADH, via FMN and iron-sulfur (Fe-S) centers, to quinones in the respiratory chain. The immediate electron acceptor for the enzyme in this species is believed to be ubiquinone. Couples the redox reaction to proton translocation (for every two electrons transferred, four hydrogen ions are translocated across the cytoplasmic membrane), and thus conserves the redox energy in a proton gradient. This subunit may bind ubiquinone. The chain is NADH-quinone oxidoreductase subunit H from Neisseria meningitidis serogroup A / serotype 4A (strain DSM 15465 / Z2491).